Consider the following 189-residue polypeptide: Large ribosomal subunit protein bL9 (189 aa).

It belongs to the bacterial ribosomal protein bL9 family.

In terms of biological role, binds to the 23S rRNA. In Methylobacterium nodulans (strain LMG 21967 / CNCM I-2342 / ORS 2060), this protein is Large ribosomal subunit protein bL9.